The chain runs to 252 residues: Ribosomal RNA small subunit methyltransferase A (252 aa).

Positions 10, 12, 36, 57, 81, and 98 each coordinate S-adenosyl-L-methionine.

This sequence belongs to the class I-like SAM-binding methyltransferase superfamily. rRNA adenine N(6)-methyltransferase family. RsmA subfamily.

It is found in the cytoplasm. The enzyme catalyses adenosine(1518)/adenosine(1519) in 16S rRNA + 4 S-adenosyl-L-methionine = N(6)-dimethyladenosine(1518)/N(6)-dimethyladenosine(1519) in 16S rRNA + 4 S-adenosyl-L-homocysteine + 4 H(+). Its function is as follows. Specifically dimethylates two adjacent adenosines (A1518 and A1519) in the loop of a conserved hairpin near the 3'-end of 16S rRNA in the 30S particle. May play a critical role in biogenesis of 30S subunits. This Mycoplasmopsis pulmonis (strain UAB CTIP) (Mycoplasma pulmonis) protein is Ribosomal RNA small subunit methyltransferase A.